Here is a 300-residue protein sequence, read N- to C-terminus: Sulfate adenylyltransferase subunit 2 (300 aa).

The tract at residues 281 to 300 (RAIDRDEAGSMEKKKREGYF) is disordered.

It belongs to the PAPS reductase family. CysD subfamily. In terms of assembly, heterodimer composed of CysD, the smaller subunit, and CysN.

It carries out the reaction sulfate + ATP + H(+) = adenosine 5'-phosphosulfate + diphosphate. Its pathway is sulfur metabolism; hydrogen sulfide biosynthesis; sulfite from sulfate: step 1/3. In terms of biological role, with CysN forms the ATP sulfurylase (ATPS) that catalyzes the adenylation of sulfate producing adenosine 5'-phosphosulfate (APS) and diphosphate, the first enzymatic step in sulfur assimilation pathway. APS synthesis involves the formation of a high-energy phosphoric-sulfuric acid anhydride bond driven by GTP hydrolysis by CysN coupled to ATP hydrolysis by CysD. The chain is Sulfate adenylyltransferase subunit 2 from Brucella canis (strain ATCC 23365 / NCTC 10854 / RM-666).